The following is a 485-amino-acid chain: N-succinylglutamate 5-semialdehyde dehydrogenase 2 (485 aa).

221-226 (GSAAAG) is a binding site for NAD(+). Residues glutamate 244 and cysteine 279 contribute to the active site.

The protein belongs to the aldehyde dehydrogenase family. AstD subfamily.

It carries out the reaction N-succinyl-L-glutamate 5-semialdehyde + NAD(+) + H2O = N-succinyl-L-glutamate + NADH + 2 H(+). It functions in the pathway amino-acid degradation; L-arginine degradation via AST pathway; L-glutamate and succinate from L-arginine: step 4/5. In terms of biological role, catalyzes the NAD-dependent reduction of succinylglutamate semialdehyde into succinylglutamate. The chain is N-succinylglutamate 5-semialdehyde dehydrogenase 2 from Caulobacter vibrioides (strain ATCC 19089 / CIP 103742 / CB 15) (Caulobacter crescentus).